Reading from the N-terminus, the 269-residue chain is MFIFAAAFQQNTIIMSTTSNEASVIEVVPPNANCDKPKKKFQVVPVPGEFTRGRWKVIDTRFGSAMGEFGNYPPEDEYKMIVTSKNNVITVRKKFPRPTTVTSAPILGAEEADSIRVLQKSQPRFEQVPVTNQIKILIMDPETAVVTAGNTGSTASEVGTDFALTNDMTSSPSSVALLSGDPTKMEDSAKLATATSNTVVAIDNKIVQAMDLVKTHLTFAVREEVETLRTTITDLEARLNALREENRLLRENVSPEVLAFITANKQLCE.

Belongs to the TSC-22/Dip/Bun family.

The polypeptide is Protein tsct-1 (Caenorhabditis elegans).